Reading from the N-terminus, the 176-residue chain is Ribosome maturation factor RimP (176 aa).

Residues 143–176 (LKPQTAKKKGRQEETEDMTLELDAVSRAVPEAEI) are disordered.

Belongs to the RimP family.

The protein resides in the cytoplasm. In terms of biological role, required for maturation of 30S ribosomal subunits. This is Ribosome maturation factor RimP from Chlorobium luteolum (strain DSM 273 / BCRC 81028 / 2530) (Pelodictyon luteolum).